Here is a 379-residue protein sequence, read N- to C-terminus: Fucose-specific lectin g276 (379 aa).

Glu-126 lines the alpha-L-fucose pocket. Residues Glu-126, Arg-163, and Trp-185 each coordinate beta-L-fucose. Positions 185, 222, and 234 each coordinate alpha-L-fucose. Beta-L-fucose is bound by residues Trp-242 and Glu-282. Trp-289 is an alpha-L-fucose binding site.

Belongs to the fungal fucose-specific lectin family.

Its function is as follows. Lectin that specifically binds to L-fucose. Is associated with the morphogenesis of the fungus, and plays a role in the formation of the constricting rings involved in nematode-trapping. The polypeptide is Fucose-specific lectin g276 (Arthrobotrys oligospora (strain ATCC 24927 / CBS 115.81 / DSM 1491) (Nematode-trapping fungus)).